Here is a 686-residue protein sequence, read N- to C-terminus: Rhophilin-2 (686 aa).

The REM-1 domain maps to 26 to 100 (NPLAQTGRSK…LEGLNISVGV (75 aa)). Residues 46–66 (QILKAVRMRTGAENLLKVATN) are interaction with Rho. One can recognise a BRO1 domain in the interval 111 to 460 (PLIPLGLKET…RLTYAQHQEE (350 aa)). The region spanning 515 to 593 (RSIRFTAEEG…DEIEMKVVSL (79 aa)) is the PDZ domain. T655 is subject to Phosphothreonine.

The protein belongs to the RHPN family. Interacts with GTP-bound RhoA and RhoB. Interacts with both GTP- and GDP-bound RhoA. According to PubMed:12473120, it does not interact with RhoA. Interacts with KRT18. As to expression, widely expressed. Highly expressed in prostate, trachea, stomach, colon, thyroid and pancreas. Expressed at lower level in brain, spinal cord, kidney, placenta and liver.

It is found in the cytoplasm. It localises to the perinuclear region. Its function is as follows. Binds specifically to GTP-Rho. May function in a Rho pathway to limit stress fiber formation and/or increase the turnover of F-actin structures in the absence of high levels of RhoA activity. The protein is Rhophilin-2 (RHPN2) of Homo sapiens (Human).